The chain runs to 475 residues: Melanopsin (475 aa).

Residues 1–21 (MGTQHRIKVDVPDRVLYTVGS) lie on the Extracellular side of the membrane. Residues 22 to 42 (CVLVIGSIGITGNLLVLYAFY) traverse the membrane as a helical segment. Topologically, residues 43–53 (SNKRLRTPANY) are cytoplasmic. The chain crosses the membrane as a helical span at residues 54–74 (FIMNLAASDFLMSATQAPICF). Over 75 to 90 (LNSMHTEWILGDIGCN) the chain is Extracellular. Residues cysteine 89 and cysteine 167 are joined by a disulfide bond. A helical transmembrane segment spans residues 91 to 111 (FYVFCGALFGITSMMTLLAIS). Residues 112–134 (VDRYCVITKPLQSIKRSSKKRSC) lie on the Cytoplasmic side of the membrane. The helical transmembrane segment at 135–155 (IIIAFVWLYSLGWSVCPLFGW) threads the bilayer. Residues 156 to 187 (SSYIPEGLMISCTWDYVSYSPANRSYTMMLCC) lie on the Extracellular side of the membrane. N-linked (GlcNAc...) asparagine glycosylation is present at asparagine 178. Residues 188-208 (FVFFIPLIIIFHCYLFMFLAI) traverse the membrane as a helical segment. Over 209 to 240 (RSTGRNVQKLGSTYNRKSNVSQSVKSEWKLAK) the chain is Cytoplasmic. Residues 241–261 (IAFVAIVVFVLSWSPYACVTL) form a helical membrane-spanning segment. Topologically, residues 262-276 (IAWAGYAKTLNPYSK) are extracellular. The helical transmembrane segment at 277-297 (SVPAVIAKASAIYNPIIYAII) threads the bilayer. An N6-(retinylidene)lysine modification is found at lysine 284. Residues 298–475 (HPRYRRTIRS…EQHQMEASSH (178 aa)) are Cytoplasmic-facing. Disordered stretches follow at residues 370 to 390 (VEAARKKQQPHRSRSFSKQAE) and 445 to 475 (PFGLNSSSTEENADTSDMEVQEQHQMEASSH). Residues 375-384 (KKQQPHRSRS) show a composition bias toward basic residues. Polar residues predominate over residues 445-454 (PFGLNSSSTE). A compositionally biased stretch (acidic residues) spans 455–464 (ENADTSDMEV). Residues 465 to 475 (QEQHQMEASSH) are compositionally biased toward basic and acidic residues.

Belongs to the G-protein coupled receptor 1 family. Opsin subfamily. In terms of tissue distribution, highest level in the lateral eye. Low level in the brain.

It localises to the cell membrane. Its function is as follows. Photoreceptor implicated in non-image-forming responses to light. May be able to isomerize covalently bound all-trans retinal back to 11-cis retinal. The protein is Melanopsin (OPN4) of Podarcis siculus (Italian wall lizard).